A 129-amino-acid chain; its full sequence is ALK and LTK ligand 1 (129 aa).

Residues 1–27 form the signal peptide; the sequence is MRPLKPGAPLPALFLLALALSPHGAHG. The interval 24-63 is disordered; sequence GAHGRPRGRRGARVTDKEPKPLLFLPAAGAGRTPSGSRSA. A compositionally biased stretch (basic residues) spans 25–35; the sequence is AHGRPRGRRGA. 2 disulfide bridges follow: Cys90–Cys126 and Cys104–Cys113.

The protein belongs to the ALKAL family. Widely expressed with highest levels in thyroid and moderate levels in stomach, trachea, small intestine, prostate and brain.

The protein resides in the secreted. Its subcellular location is the cell membrane. Cytokine that acts as a physiological ligand for receptor tyrosine kinase LTK, leading to its activation. Monomeric ALKAL1 binds to LTK, leading to LTK homodimerization and activation. In contrast to ALKAL2, does not act as a potent physiological ligand for ALK. The sequence is that of ALK and LTK ligand 1 from Homo sapiens (Human).